The primary structure comprises 263 residues: MMRLEKVFYLTNPTTKDLENFIDMYVFKYILILLARCKVFYEGRAKSQLEEGDRVIIIKPDGAFLIHKDKKREPVNWQPSGSSIIWEVEDNFFILKSIRRKPKEELKVVISEVYHACAFNCEDYEEINLRGSESEMAEMIFRNPDLIEEGFKPISREYQIPTGIVDILGKDKENKWVILELKRRRADLQAVSQLKRYVEYFKNKYGEDKVRGILVSPSLTTGAEKLLKEENLEFKRLNPPKGSKRDLKHNIKTKKTTVLDEWL.

The protein belongs to the NucS endonuclease family.

The protein localises to the cytoplasm. Cleaves both 3' and 5' ssDNA extremities of branched DNA structures. This chain is Endonuclease NucS, found in Methanocaldococcus jannaschii (strain ATCC 43067 / DSM 2661 / JAL-1 / JCM 10045 / NBRC 100440) (Methanococcus jannaschii).